We begin with the raw amino-acid sequence, 106 residues long: NADH-quinone oxidoreductase subunit K (106 aa).

Helical transmembrane passes span 8–28 (IGIE…IFGV), 35–55 (IIMF…FVAF), and 66–86 (VFVF…LAIL).

This sequence belongs to the complex I subunit 4L family. NDH-1 is composed of 14 different subunits. Subunits NuoA, H, J, K, L, M, N constitute the membrane sector of the complex.

It localises to the cell inner membrane. It carries out the reaction a quinone + NADH + 5 H(+)(in) = a quinol + NAD(+) + 4 H(+)(out). Functionally, NDH-1 shuttles electrons from NADH, via FMN and iron-sulfur (Fe-S) centers, to quinones in the respiratory chain. The immediate electron acceptor for the enzyme in this species is believed to be a menaquinone. Couples the redox reaction to proton translocation (for every two electrons transferred, four hydrogen ions are translocated across the cytoplasmic membrane), and thus conserves the redox energy in a proton gradient. In Flavobacterium psychrophilum (strain ATCC 49511 / DSM 21280 / CIP 103535 / JIP02/86), this protein is NADH-quinone oxidoreductase subunit K.